The chain runs to 1129 residues: Inositol hexakisphosphate and diphosphoinositol-pentakisphosphate kinase 2 (1129 aa).

A Phosphoserine modification is found at Ser44. Residue Lys59–Lys60 coordinates substrate. Residues Arg140, Lys193, His200, and Arg219 each coordinate ATP. Residue Arg219–Lys220 participates in substrate binding. Ser229 is subject to Phosphoserine. Residues Glu243 to Met246 and Asp252 to Lys254 contribute to the ATP site. Residues Lys254 and Arg268 each coordinate substrate. ATP contacts are provided by residues Ser270, Asp315, and Asp327–Asn329. Ser332–Lys335 contacts substrate. The segment at Pro377–Met448 is polyphosphoinositide-binding domain. The disordered stretch occupies residues Lys904–Glu945. Residues Ala921–Glu945 show a composition bias toward basic and acidic residues. Ser1051, Ser1058, and Ser1066 each carry phosphoserine. The tract at residues Tyr1070 to Arg1129 is disordered. Residues Ala1081–Ser1098 show a composition bias toward low complexity. Residues Ser1106 and Ser1107 each carry the phosphoserine modification.

This sequence belongs to the histidine acid phosphatase family. VIP1 subfamily. Ubiquitously expressed. Expressed in the cochlear and vestibular sensory hair cells, supporting cells and spiral ganglion neurons.

It is found in the cytoplasm. It localises to the cytosol. It catalyses the reaction 1D-myo-inositol hexakisphosphate + ATP = 1-diphospho-1D-myo-inositol 2,3,4,5,6-pentakisphosphate + ADP. It carries out the reaction 5-diphospho-1D-myo-inositol 1,2,3,4,6-pentakisphosphate + ATP + H(+) = 1,5-bis(diphospho)-1D-myo-inositol 2,3,4,6-tetrakisphosphate + ADP. Its function is as follows. Bifunctional inositol kinase that acts in concert with the IP6K kinases IP6K1, IP6K2 and IP6K3 to synthesize the diphosphate group-containing inositol pyrophosphates diphosphoinositol pentakisphosphate, PP-InsP5, and bis-diphosphoinositol tetrakisphosphate, (PP)2-InsP4. PP-InsP5 and (PP)2-InsP4, also respectively called InsP7 and InsP8, regulate a variety of cellular processes, including apoptosis, vesicle trafficking, cytoskeletal dynamics, exocytosis, insulin signaling and neutrophil activation. Phosphorylates inositol hexakisphosphate (InsP6) at position 1 to produce PP-InsP5 which is in turn phosphorylated by IP6Ks to produce (PP)2-InsP4. Alternatively, phosphorylates PP-InsP5 at position 1, produced by IP6Ks from InsP6, to produce (PP)2-InsP4. Required for normal hearing. The chain is Inositol hexakisphosphate and diphosphoinositol-pentakisphosphate kinase 2 from Mus musculus (Mouse).